Reading from the N-terminus, the 299-residue chain is ATP phosphoribosyltransferase (299 aa).

This sequence belongs to the ATP phosphoribosyltransferase family. Long subfamily. Mg(2+) serves as cofactor.

The protein resides in the cytoplasm. The enzyme catalyses 1-(5-phospho-beta-D-ribosyl)-ATP + diphosphate = 5-phospho-alpha-D-ribose 1-diphosphate + ATP. It participates in amino-acid biosynthesis; L-histidine biosynthesis; L-histidine from 5-phospho-alpha-D-ribose 1-diphosphate: step 1/9. With respect to regulation, feedback inhibited by histidine. In terms of biological role, catalyzes the condensation of ATP and 5-phosphoribose 1-diphosphate to form N'-(5'-phosphoribosyl)-ATP (PR-ATP). Has a crucial role in the pathway because the rate of histidine biosynthesis seems to be controlled primarily by regulation of HisG enzymatic activity. In Pasteurella multocida (strain Pm70), this protein is ATP phosphoribosyltransferase (hisG).